We begin with the raw amino-acid sequence, 404 residues long: Keratin, type I cuticular Ha3-II (404 aa).

Residues 1 to 56 (MPYNFCLPSLSCRTSCSSRPCVPPSCHGYTLPGACNIPANVSNCNWFCEGSFNGSE) are head. The IF rod domain occupies 56–367 (EKETMQFLND…SLLESEDCKL (312 aa)). The tract at residues 57–91 (KETMQFLNDRLASYLEKVRQLERDNAELENLIRER) is coil 1A. The interval 92-102 (SQQQEPLLCPS) is linker 1. Positions 103–203 (YQSYFKTIEE…HEQEVNTLRC (101 aa)) are coil 1B. Residues 204-219 (QLGDRLNVEVDAAPAV) form a linker 12 region. The segment at 220–363 (DLNQVLNETR…NTYRSLLESE (144 aa)) is coil 2. A tail region spans residues 364–404 (DCKLPSNPCATTNACEKPIGSCVTNPCGPRSRCGPCNTFGY).

This sequence belongs to the intermediate filament family.

This chain is Keratin, type I cuticular Ha3-II (KRT33B), found in Homo sapiens (Human).